Here is a 117-residue protein sequence, read N- to C-terminus: Large ribosomal subunit protein eL22 (117 aa).

Ser-49 and Ser-50 each carry phosphoserine.

Belongs to the eukaryotic ribosomal protein eL22 family. As to quaternary structure, component of the large ribosomal subunit (LSU). Mature yeast ribosomes consist of a small (40S) and a large (60S) subunit. The 40S small subunit contains 1 molecule of ribosomal RNA (18S rRNA) and at least 33 different proteins. The large 60S subunit contains 3 rRNA molecules (25S, 5.8S and 5S rRNA) and at least 46 different proteins.

It is found in the cytoplasm. The protein resides in the nucleus. It localises to the nucleolus. In terms of biological role, component of the ribosome, a large ribonucleoprotein complex responsible for the synthesis of proteins in the cell. The small ribosomal subunit (SSU) binds messenger RNAs (mRNAs) and translates the encoded message by selecting cognate aminoacyl-transfer RNA (tRNA) molecules. The large subunit (LSU) contains the ribosomal catalytic site termed the peptidyl transferase center (PTC), which catalyzes the formation of peptide bonds, thereby polymerizing the amino acids delivered by tRNAs into a polypeptide chain. The nascent polypeptides leave the ribosome through a tunnel in the LSU and interact with protein factors that function in enzymatic processing, targeting, and the membrane insertion of nascent chains at the exit of the ribosomal tunnel. This chain is Large ribosomal subunit protein eL22 (rpl22), found in Schizosaccharomyces pombe (strain 972 / ATCC 24843) (Fission yeast).